The sequence spans 428 residues: Putative aspergillopepsin A-like aspartic endopeptidase AFUA_2G15950 (428 aa).

The signal sequence occupies residues 1 to 19; it reads MHSLQSFLFLLLLGYGVFA. The propeptide at 20-90 is activation peptide; sequence APTSPQAQSQ…GTAANLVTDV (71 aa). A Peptidase A1 domain is found at 110–425; the sequence is FVSPVTIGGQ…DLRGPSIGLA (316 aa). Residue Asp126 is part of the active site. N-linked (GlcNAc...) asparagine glycosylation is present at Asn276. Residue Asp312 is part of the active site. An N-linked (GlcNAc...) asparagine glycan is attached at Asn380.

Belongs to the peptidase A1 family.

Its subcellular location is the secreted. This is Putative aspergillopepsin A-like aspartic endopeptidase AFUA_2G15950 from Aspergillus fumigatus (strain ATCC MYA-4609 / CBS 101355 / FGSC A1100 / Af293) (Neosartorya fumigata).